A 32-amino-acid chain; its full sequence is Conotoxin Cltx-4 (32 aa).

4-hydroxyproline occurs at positions 2, 24, 28, and 30. Serine 32 bears the Serine amide mark.

Contains 4 disulfide bonds. Expressed by the venom duct.

The protein resides in the secreted. The chain is Conotoxin Cltx-4 from Californiconus californicus (California cone).